Here is a 175-residue protein sequence, read N- to C-terminus: Lactobacillus up-regulated protein (175 aa).

Positions 1 to 18 (MRSIFLAVLGLMATSSLA) are cleaved as a signal peptide. The N-linked (GlcNAc...) asparagine glycan is linked to N59.

The chain is Lactobacillus up-regulated protein (lbuA) from Emericella nidulans (strain FGSC A4 / ATCC 38163 / CBS 112.46 / NRRL 194 / M139) (Aspergillus nidulans).